Reading from the N-terminus, the 272-residue chain is Phosphoglycolate phosphatase (272 aa).

The active-site Nucleophile is aspartate 19. Residues aspartate 19, aspartate 21, and aspartate 182 each coordinate Mg(2+).

The protein belongs to the HAD-like hydrolase superfamily. CbbY/CbbZ/Gph/YieH family. The cofactor is Mg(2+).

It catalyses the reaction 2-phosphoglycolate + H2O = glycolate + phosphate. It functions in the pathway organic acid metabolism; glycolate biosynthesis; glycolate from 2-phosphoglycolate: step 1/1. Its function is as follows. Specifically catalyzes the dephosphorylation of 2-phosphoglycolate. Is involved in the dissimilation of the intracellular 2-phosphoglycolate formed during the DNA repair of 3'-phosphoglycolate ends, a major class of DNA lesions induced by oxidative stress. The chain is Phosphoglycolate phosphatase from Pseudomonas savastanoi pv. phaseolicola (strain 1448A / Race 6) (Pseudomonas syringae pv. phaseolicola (strain 1448A / Race 6)).